Consider the following 534-residue polypeptide: Benzaldehyde dehydrogenase, mitochondrial (534 aa).

The N-terminal 29 residues, 1 to 29, are a transit peptide targeting the mitochondrion; sequence MAAHRFSSLLSRSVPLLSRGGKQSYLGRG. Residues 199–202, 225–228, 258–259, 278–279, and 301–303 each bind NAD(+); these read IPWN, KTAE, GP, GS, and ELG. Residue glutamate 301 is the Proton acceptor of the active site. Cysteine 335 serves as the catalytic Nucleophile. Residues 381–385 and 432–434 each bind NAD(+); these read DQFEK and EIF.

Belongs to the aldehyde dehydrogenase family. As to quaternary structure, homotetramer. Expressed predominantly in the upper and lower flower petal lobes, and, at low levels, in flower tubes, pistils, stamens and sepals.

It localises to the mitochondrion. The enzyme catalyses an aldehyde + NAD(+) + H2O = a carboxylate + NADH + 2 H(+). It catalyses the reaction acetaldehyde + NAD(+) + H2O = acetate + NADH + 2 H(+). The catalysed reaction is benzaldehyde + NAD(+) + H2O = benzoate + NADH + 2 H(+). It carries out the reaction 2-phenylacetaldehyde + NAD(+) + H2O = 2-phenylacetate + NADH + 2 H(+). It participates in aromatic compound metabolism. With respect to regulation, inhibited by disulfiram. Component of the floral volatile benzenoid/phenylpropanoid (FVBP) biosynthetic pathway. Catalyzes the oxidation of benzaldehyde to benzoic acid (BA). Capable of oxidizing a broad spectrum of aliphatic aldehydes; increased carbon chain length results in a decrease in its efficiency. This chain is Benzaldehyde dehydrogenase, mitochondrial, found in Antirrhinum majus (Garden snapdragon).